Consider the following 1291-residue polypeptide: GRB10-interacting GYF protein 2 (1291 aa).

The residue at position 2 (Ala-2) is an N-acetylalanine. A phosphoserine mark is found at Ser-19, Ser-26, and Ser-30. Omega-N-methylarginine occurs at positions 107, 119, and 121. The segment at 112 to 132 (GTVVGAPRGRSSSRGRGRGRG) is disordered. A Phosphoserine modification is found at Ser-140. Disordered stretches follow at residues 148–196 (FGRG…RKHE), 209–248 (REEQNGEDEDGGWRLAGSRRDGERWRPHSPDGPRSTGWRE), and 267–484 (RGYR…TEPD). Position 150 is an omega-N-methylarginine (Arg-150). A compositionally biased stretch (basic and acidic residues) spans 152–183 (GGREMHRSQSWEERGDRRFEKPGRKDVGRPNF). Residues Ser-161, Ser-190, and Ser-237 each carry the phosphoserine modification. Positions 226–248 (SRRDGERWRPHSPDGPRSTGWRE) are enriched in basic and acidic residues. A DDX6 binding motif motif is present at residues 281–311 (DDRDSLPEWCLEDAEEEMGTFDSSGAFLSLK). The segment covering 290–299 (CLEDAEEEMG) has biased composition (acidic residues). A compositionally biased stretch (basic and acidic residues) spans 313-364 (VQKEPIPEEQEMDFRPVEEGEERSDSDSSHNEEAKEPDKTNRREGEKTDRAG). A compositionally biased stretch (polar residues) spans 371-393 (VPQTSLSSARPGTPSDHQPQEAT). Thr-383 is modified (phosphothreonine). Positions 394 to 415 (QFERKDEPKAEQVEKAEEENRS) are enriched in basic and acidic residues. The GYF domain maps to 534–582 (MQKWYYKDPQGEIQGPFNNQEMAEWFQAGYFTMSLLVKRACDESFQPLG). A required for GRB10-binding region spans residues 548 to 564 (GPFNNQEMAEWFQAGYF). Position 594 is a phosphoserine (Ser-594). Disordered regions lie at residues 732 to 794 (KAKA…QEEA), 846 to 937 (EEAA…SNTA), 958 to 998 (ERQL…SKPA), 1011 to 1053 (EARQ…SVWG), and 1090 to 1118 (KEVGPRNSTNKNKNNASLSKSVGVSNRQN). Positions 846–898 (EEAAKWAREEEEAQRRLEENRLRMEEEAARLRHEEEERKRKELELQRQKDLMR) are enriched in basic and acidic residues. Positions 899–924 (QRQQQQEALRRLQQQQQQQQLAQMKL) are enriched in low complexity. Residues 925-937 (PSSSTWGQQSNTA) show a composition bias toward polar residues. Over residues 958 to 973 (ERQLREEQRRQQRELM) the composition is skewed to basic and acidic residues. The span at 977–986 (QQQQQQQQQQ) shows a compositional bias: low complexity. Ser-995 is subject to Phosphoserine. Positions 1015–1031 (MQKQQQQQQQQQQQHQQ) are enriched in low complexity. The span at 1032–1053 (SNRARNSTHSNLHTSLGNSVWG) shows a compositional bias: polar residues. The segment covering 1096 to 1110 (NSTNKNKNNASLSKS) has biased composition (low complexity). Residue Lys-1129 forms a Glycyl lysine isopeptide (Lys-Gly) (interchain with G-Cter in SUMO2) linkage. Disordered regions lie at residues 1202–1223 (AKQKVNQQRQQQQQQQQQQDSV) and 1239–1263 (QSNNQQSNFEAVQSGKKKKKQKMVR). The segment covering 1208-1220 (QQRQQQQQQQQQQ) has biased composition (low complexity). Phosphoserine is present on Ser-1276.

The protein belongs to the GIGYF family. In terms of assembly, component of the 4EHP-GYF2 complex, at least composed of EIF4E2, GIGYF2 and ZNF598. Interacts (via the 4EHP-binding motif) with EIF4E2; the interaction is direct. Interacts with ZFP36/TTP (via P-P-P-P-G repeats); the interaction is direct. Interacts with GRB10. Interacts (via DDX6 motif) with DDX6 (via RecA-like domain 2). As to expression, expressed in heart, liver, kidney and brain as well as in testis.

Key component of the 4EHP-GYF2 complex, a multiprotein complex that acts as a repressor of translation initiation. In the 4EHP-GYF2 complex, acts as a factor that bridges EIF4E2 to ZFP36/TTP, linking translation repression with mRNA decay. Also recruits and bridges the association of the 4EHP complex with the decapping effector protein DDX6, which is required for the ZFP36/TTP-mediated down-regulation of AU-rich mRNA. May act cooperatively with GRB10 to regulate tyrosine kinase receptor signaling, including IGF1 and insulin receptors. In association with EIF4E2, assists ribosome-associated quality control (RQC) by sequestering the mRNA cap, blocking ribosome initiation and decreasing the translational load on problematic messages. Part of a pathway that works in parallel to RQC-mediated degradation of the stalled nascent polypeptide. GIGYF2 and EIF4E2 work downstream and independently of ZNF598, which seems to work as a scaffold that can recruit them to faulty mRNA even if alternative recruitment mechanisms may exist. The chain is GRB10-interacting GYF protein 2 from Mus musculus (Mouse).